The primary structure comprises 245 residues: Glycerophosphodiester phosphodiesterase (245 aa).

Positions 2–241 constitute a GP-PDE domain; sequence TKIFAHRGFK…DFPDRAVKIR (240 aa). His7 serves as the catalytic Proton acceptor. A divalent metal cation contacts are provided by Glu34 and Asp36. Residue His49 is the Proton donor of the active site. An a divalent metal cation-binding site is contributed by Glu110.

This sequence belongs to the glycerophosphoryl diester phosphodiesterase family. Ni(2+) is required as a cofactor. Requires Co(2+) as cofactor. The cofactor is Mn(2+).

It catalyses the reaction a sn-glycero-3-phosphodiester + H2O = an alcohol + sn-glycerol 3-phosphate + H(+). Inhibited by EDTA and various organic solvents such as chloroform, toluene or benzene. Its function is as follows. Glycerophosphodiester phosphodiesterase hydrolyzes glycerophosphodiesters into glycerol-3-phosphate (G3P) and the corresponding alcohol. Can hydrolyze the model substrate bis-(p-nitrophenyl phosphate) (bis(pNPP)) to p-nitrophenol. Can also catalyze the degradation of diphenyl phosphate (DPHP) to phenyl phosphate (PHP). DPHP is an aryl phosphate ester used as a chemical additive and an industrial catalyst that can easily spread to the environment and exhibits toxicity toward organisms. The chain is Glycerophosphodiester phosphodiesterase from Bacillus altitudinis.